Reading from the N-terminus, the 496-residue chain is MLO-like protein 15 (496 aa).

The Extracellular segment spans residues 1 to 9 (MAGGGTTLE). The helical transmembrane segment at 10–30 (YTPTWVVALVCSVIVSISFAV) threads the bilayer. Residues 31 to 59 (ERLIHRAGKHFKNNDQKQLFGALQKIKEE) lie on the Cytoplasmic side of the membrane. A helical transmembrane segment spans residues 60–80 (LMLVGFISLLLSVGQSKIAKI). The Extracellular segment spans residues 81–147 (CISKELSEKF…MSLSALHELH (67 aa)). Residues 148-168 (IFIFVLAVAHIIFCLLTIVFG) form a helical membrane-spanning segment. Residues 169–269 (TMKIKQWKKW…KYLMRALNSD (101 aa)) lie on the Cytoplasmic side of the membrane. The chain crosses the membrane as a helical span at residues 270–290 (FKKVVGISWYLWVFVVLFLLL). Asn-291 is a topological domain (extracellular). Residues 292–312 (IVAWHVYFWLAFIPLILLLAV) traverse the membrane as a helical segment. Residues 313–355 (GTKLEHIITDLAHEVAEKHIAVEGDLVVRPSDDLFWFQSPRLV) lie on the Cytoplasmic side of the membrane. The chain crosses the membrane as a helical span at residues 356–376 (LFLIHFILFQNSFEIAYFFFI). The Extracellular portion of the chain corresponds to 377 to 397 (LFQFGWDSCIMDHVKFVIPRL). A helical transmembrane segment spans residues 398 to 418 (VIGVIIQLLCSYSTLPLYALV). At 419–496 (TQMGSSFKGA…KEKSEIAHHD (78 aa)) the chain is on the cytoplasmic side. Residues 432–453 (EQTQEHLVGWAKMAKRGVKKGA) form a calmodulin-binding region. The interval 454–496 (TQVGTSHDATSPRPSIQLNSLLGKGSSQQNQNPKEKSEIAHHD) is disordered. A compositionally biased stretch (polar residues) spans 455-485 (QVGTSHDATSPRPSIQLNSLLGKGSSQQNQN). Residues 486 to 496 (PKEKSEIAHHD) are compositionally biased toward basic and acidic residues.

The protein belongs to the MLO family.

The protein localises to the membrane. Its function is as follows. May be involved in modulation of pathogen defense and leaf cell death. Activity seems to be regulated by Ca(2+)-dependent calmodulin binding and seems not to require heterotrimeric G proteins. The polypeptide is MLO-like protein 15 (MLO15) (Arabidopsis thaliana (Mouse-ear cress)).